A 333-amino-acid polypeptide reads, in one-letter code: 2-haloacrylate reductase (333 aa).

Residue 153–159 participates in NADP(+) binding; that stretch reads AAAGGMG.

Belongs to the zinc-containing alcohol dehydrogenase family.

The enzyme catalyses (S)-2-chloropropanoate + NADP(+) = 2-chloroacrylate + NADPH + H(+). In terms of biological role, involved in the degradation of unsaturated organohalogen compounds. Catalyzes the NADPH-dependent reduction of the carbon-carbon double bond of 2-chloroacrylate to produce (S)-2-chloropropionate, which is probably further metabolized to (R)-lactate by (S)-2-haloacid dehalogenase. Can also use 2-bromoacrylate as substrate. Does not act on acrylate, methacrylate, 1,4-benzoquinone and 1,4-naphthoquinone. The sequence is that of 2-haloacrylate reductase from Burkholderia sp.